Consider the following 101-residue polypeptide: Small ribosomal subunit protein uS14 (101 aa).

It belongs to the universal ribosomal protein uS14 family. Part of the 30S ribosomal subunit. Contacts proteins S3 and S10.

In terms of biological role, binds 16S rRNA, required for the assembly of 30S particles and may also be responsible for determining the conformation of the 16S rRNA at the A site. The protein is Small ribosomal subunit protein uS14 of Ruegeria sp. (strain TM1040) (Silicibacter sp.).